The primary structure comprises 130 residues: Small ribosomal subunit protein uS11 (130 aa).

It belongs to the universal ribosomal protein uS11 family. Part of the 30S ribosomal subunit. Interacts with proteins S7 and S18. Binds to IF-3.

In terms of biological role, located on the platform of the 30S subunit, it bridges several disparate RNA helices of the 16S rRNA. Forms part of the Shine-Dalgarno cleft in the 70S ribosome. The sequence is that of Small ribosomal subunit protein uS11 from Tropheryma whipplei (strain TW08/27) (Whipple's bacillus).